Consider the following 98-residue polypeptide: Co-chaperonin GroES (98 aa).

This sequence belongs to the GroES chaperonin family. In terms of assembly, heptamer of 7 subunits arranged in a ring. Interacts with the chaperonin GroEL.

It localises to the cytoplasm. Functionally, together with the chaperonin GroEL, plays an essential role in assisting protein folding. The GroEL-GroES system forms a nano-cage that allows encapsulation of the non-native substrate proteins and provides a physical environment optimized to promote and accelerate protein folding. GroES binds to the apical surface of the GroEL ring, thereby capping the opening of the GroEL channel. The polypeptide is Co-chaperonin GroES (Kineococcus radiotolerans (strain ATCC BAA-149 / DSM 14245 / SRS30216)).